Reading from the N-terminus, the 124-residue chain is Ragulator complex protein LAMTOR3 (124 aa).

A required for interaction with LAMTOR2 region spans residues 57-70 (TDQGSKLGLSKNKS).

This sequence belongs to the LAMTOR3 family. In terms of assembly, part of the Ragulator complex composed of LAMTOR1, LAMTOR2, LAMTOR3, LAMTOR4 and LAMTOR5. LAMTOR4 and LAMTOR5 form a heterodimer that interacts, through LAMTOR1, with a LAMTOR2, LAMTOR3 heterodimer. Interacts with LAMTOR1 and LAMTOR2; the interaction is direct. The Ragulator complex interacts with both the mTORC1 complex and heterodimers constituted of the Rag GTPases RagA/RRAGA, RagB/RRAGB, RagC/RRAGC and RagD/RRAGD; regulated by amino acid availability. The Ragulator complex interacts with SLC38A9; the probable amino acid sensor. Component of the lysosomal folliculin complex (LFC), composed of FLCN, FNIP1 (or FNIP2), RagA/RRAGA or RagB/RRAGB GDP-bound, RagC/RRAGC or RagD/RRAGD GTP-bound, and Ragulator. Interacts with MAP2K1/MEK1 and MAPK2. Interacts with MORG1.

It is found in the late endosome membrane. Its function is as follows. As part of the Ragulator complex it is involved in amino acid sensing and activation of mTORC1, a signaling complex promoting cell growth in response to growth factors, energy levels, and amino acids. Activated by amino acids through a mechanism involving the lysosomal V-ATPase, the Ragulator plays a dual role for the small GTPases Rag (RagA/RRAGA, RagB/RRAGB, RagC/RRAGC and/or RagD/RRAGD): it (1) acts as a guanine nucleotide exchange factor (GEF), activating the small GTPases Rag and (2) mediates recruitment of Rag GTPases to the lysosome membrane. Activated Ragulator and Rag GTPases function as a scaffold recruiting mTORC1 to lysosomes where it is in turn activated. Adapter protein that enhances the efficiency of the MAP kinase cascade facilitating the activation of MAPK2. The protein is Ragulator complex protein LAMTOR3 of Homo sapiens (Human).